Consider the following 246-residue polypeptide: Cold-regulated protein 27 (246 aa).

2 disordered regions span residues Met-1–Ala-39 and Glu-151–Leu-232. Over residues Ser-168–Ser-180 the composition is skewed to low complexity.

It localises to the nucleus. Its function is as follows. Together with COR28, involved in central circadian clock regulation and in flowering promotion, by binding to the chromatin of clock-associated evening genes TOC1, PRR5, ELF4 and cold-responsive genes in order to repress their transcription. Negative regulator of freezing tolerance. This Arabidopsis thaliana (Mouse-ear cress) protein is Cold-regulated protein 27.